A 579-amino-acid chain; its full sequence is MNAIVALCHFCELHGPRTLFCTEALHSPHPQGASCGDSIGQGEQAEDEEMGIQMSSRIRCHSPAEGASADSNSPRPKKSDMCEGCRSLAAGHPGYISHDKETSIKYVSHQHPNHPQLFSIVRQACVRSLSCEVCPGREGPIFFGDEQHGFVFSHTFFIKDSLARGFQRWYSIIVIMMDRIYLINSWPFLLAKIRGVIDELQGKALKVFEAEQFGCPQRPLRINTAFTPFLHQRNGNAARSLTSLTSDDNLWACLHTSFAWLLKACGCRLTEKLLEGAPTEDTLVQMEKQADLEEECAAREVADGEEGRPRLQPELMEGRELSKCPTESSVLSDCSWNMVQRRMGVFRSLRHMRQVLGASAFRMLAWHVLMGNQVIWKGQDQELIQSAFDVLQAMLPVGCVRVIPYSEKYEDAYRCNFLGLSPQAEIPLHVQSSEFSVMVDVRHANRSNLYPALFVDDEPLSKYEFVVASGSPVTIDKVGLTILNKIEAALSNENLSMDVVDQCLICLKEEWMNKVKVLFKFTKVDSRPKEDTQKLLGILGASEEDNIKLLKFWMTGLSKTYKSHLMSSVRSPTASECRN.

Positions 32-52 (GASCGDSIGQGEQAEDEEMGI) are disordered. Positions 86–242 (RSLAAGHPGY…RNGNAARSLT (157 aa)) constitute a uDENN FLCN/SMCR8-type domain. The cDENN FLCN/SMCR8-type domain maps to 337–491 (NMVQRRMGVF…ILNKIEAALS (155 aa)). A dDENN FLCN/SMCR8-type domain is found at 493–558 (ENLSMDVVDQ…LLKFWMTGLS (66 aa)).

Belongs to the folliculin family. In terms of assembly, component of the lysosomal folliculin complex (LFC).

It localises to the lysosome membrane. Its subcellular location is the cytoplasm. The protein resides in the cytosol. The protein localises to the cell projection. It is found in the cilium. It localises to the cytoskeleton. Its subcellular location is the microtubule organizing center. The protein resides in the centrosome. The protein localises to the spindle. It is found in the nucleus. With respect to regulation, GTPase-activating activity is inhibited in the folliculin complex (LFC), which stabilizes the GDP-bound state of RagA/RRAGA (or RagB/RRAGB), because Arg-164 is located far from the RagC/RRAGC or RagD/RRAGD nucleotide pocket. Disassembly of the LFC complex upon amino acid restimulation liberates the GTPase-activating activity. Its function is as follows. Multi-functional protein, involved in both the cellular response to amino acid availability and in the regulation of glycolysis. GTPase-activating protein that plays a key role in the cellular response to amino acid availability through regulation of the non-canonical mTORC1 signaling cascade controlling the MiT/TFE factors tfeb and tfe3. Activates mTORC1 by acting as a GTPase-activating protein: specifically stimulates GTP hydrolysis by RagC/RRAGC or RagD/RRAGD, promoting the conversion to the GDP-bound state of RagC/RRAGC or RagD/RRAGD, and thereby activating the kinase activity of mTORC1. The GTPase-activating activity is inhibited during starvation and activated in presence of nutrients. Acts as a key component for non-canonical mTORC1-dependent control of the MiT/TFE factors tfeb and tfe3, while it is not involved in mTORC1-dependent phosphorylation of canonical RPS6KB1/S6K1 and EIF4EBP1/4E-BP1. In low-amino acid conditions, the lysosomal folliculin complex (LFC) is formed on the membrane of lysosomes, which inhibits the GTPase-activating activity of flcn, inactivates mTORC1 and maximizes nuclear translocation of tfeb and tfe3. Upon amino acid restimulation, RagA/RRAGA (or RagB/RRAGB) nucleotide exchange promotes disassembly of the LFC complex and liberates the GTPase-activating activity of flcn, leading to activation of mTORC1 and subsequent cytoplasmic retention of tfeb and tfe3. Required for the exit of hematopoietic stem cell from pluripotency by promoting mTOR-dependent cytoplasmic retention of tfe3, thereby increasing Wnt signaling. Acts as an inhibitor of browning of adipose tissue by regulating mTOR-dependent cytoplasmic retention of tfe3. In response to flow stress, regulates STK11/LKB1 accumulation and mTORC1 activation through primary cilia. Required for starvation-induced perinuclear clustering of lysosomes by promoting association of rilp with its effector rab34. Involved in the control of embryonic stem cells differentiation; together with lamtor1 it is necessary to recruit and activate RagC/RRAGC and RagD/RRAGD at the lysosomes, and to induce exit of embryonic stem cells from pluripotency via non-canonical, mTOR-independent tfe3 inactivation. Regulates glycolysis by binding to lactate dehydrogenase ldha, acting as an uncompetitive inhibitor. The protein is Folliculin of Xenopus tropicalis (Western clawed frog).